Reading from the N-terminus, the 559-residue chain is Myb/SANT-like DNA-binding domain-containing protein 2 (559 aa).

The tract at residues 1–62 (MAAPCGSELP…GSAAGSGAAA (62 aa)) is disordered. Ser-13, Ser-24, Ser-27, Ser-32, and Ser-48 each carry phosphoserine. The span at 46 to 61 (GASPLGPGSAAGSGAA) shows a compositional bias: low complexity. A Myb-like domain is found at 103–173 (SWTPAETNAL…QCRERIKTLR (71 aa)). Residues Lys-268 and Lys-343 each participate in a glycyl lysine isopeptide (Lys-Gly) (interchain with G-Cter in SUMO2) cross-link. Ser-436 is subject to Phosphoserine.

The protein is Myb/SANT-like DNA-binding domain-containing protein 2 (Msantd2) of Mus musculus (Mouse).